A 420-amino-acid polypeptide reads, in one-letter code: LanC-like protein 3 (420 aa).

The protein belongs to the LanC-like protein family.

This chain is LanC-like protein 3 (LANCL3), found in Homo sapiens (Human).